The chain runs to 107 residues: Small ribosomal subunit protein uS17 (107 aa).

Belongs to the universal ribosomal protein uS17 family. Part of the 30S ribosomal subunit.

One of the primary rRNA binding proteins, it binds specifically to the 5'-end of 16S ribosomal RNA. In Thermotoga petrophila (strain ATCC BAA-488 / DSM 13995 / JCM 10881 / RKU-1), this protein is Small ribosomal subunit protein uS17.